Consider the following 325-residue polypeptide: Beta-ketoacyl-[acyl-carrier-protein] synthase III (325 aa).

Active-site residues include C112 and H250. Residues Q251–R255 form an ACP-binding region. The active site involves N280.

Belongs to the thiolase-like superfamily. FabH family. In terms of assembly, homodimer.

It localises to the cytoplasm. It catalyses the reaction malonyl-[ACP] + acetyl-CoA + H(+) = 3-oxobutanoyl-[ACP] + CO2 + CoA. It participates in lipid metabolism; fatty acid biosynthesis. Functionally, catalyzes the condensation reaction of fatty acid synthesis by the addition to an acyl acceptor of two carbons from malonyl-ACP. Catalyzes the first condensation reaction which initiates fatty acid synthesis and may therefore play a role in governing the total rate of fatty acid production. Possesses both acetoacetyl-ACP synthase and acetyl transacylase activities. Its substrate specificity determines the biosynthesis of branched-chain and/or straight-chain of fatty acids. In Lactococcus lactis subsp. cremoris (strain MG1363), this protein is Beta-ketoacyl-[acyl-carrier-protein] synthase III.